The sequence spans 520 residues: Nucleobase-ascorbate transporter 1 (520 aa).

The next 12 helical transmembrane spans lie at 36 to 56 (YILM…AMGG), 64 to 84 (VIQT…LFGT), 86 to 106 (LPAV…IIND), 129 to 149 (ALIV…WGLF), 150 to 170 (SRFF…LGMF), 174 to 194 (FPQL…VIGL), 213 to 233 (FPIL…TASG), 279 to 299 (FAMM…YIAA), 362 to 382 (GFMI…SIPV), 384 to 404 (IYAA…LSFL), 415 to 435 (LMIT…FAQY), and 453 to 473 (AFLN…AVFM).

The protein belongs to the nucleobase:cation symporter-2 (NCS2) (TC 2.A.40) family. In terms of tissue distribution, expressed in cotyledons 4 days after imbibition (DAI). Expressed in the minor and major veins of cotyledons and leaves, in the shoot apex and pedicels. Expressed in the root meristems, root tips and lateral root primordia.

The protein localises to the membrane. The polypeptide is Nucleobase-ascorbate transporter 1 (NAT1) (Arabidopsis thaliana (Mouse-ear cress)).